The chain runs to 320 residues: Carbonic anhydrase 6 (320 aa).

The signal sequence occupies residues Met1–Ala17. Residues Ser21–Phe278 form the Alpha-carbonic anhydrase domain. The cysteines at positions 42 and 224 are disulfide-linked. The active-site Proton donor/acceptor is the His85. Residues His111, His113, and His138 each contribute to the Zn(2+) site. Residue Thr220–Thr221 coordinates substrate. The N-linked (GlcNAc...) asparagine glycan is linked to Asn256.

The protein belongs to the alpha-carbonic anhydrase family. The cofactor is Zn(2+).

It is found in the secreted. It carries out the reaction hydrogencarbonate + H(+) = CO2 + H2O. Reversible hydration of carbon dioxide. Its role in saliva is unknown. The protein is Carbonic anhydrase 6 (CA6) of Canis lupus familiaris (Dog).